Here is a 530-residue protein sequence, read N- to C-terminus: Type 2 DNA topoisomerase 6 subunit B (530 aa).

Residues asparagine 42, aspartate 76, 96–98, 107–113, and lysine 427 each bind ATP; these read SSK and MYGLGVK.

Belongs to the TOP6B family. In terms of assembly, homodimer. Heterotetramer of two Top6A and two Top6B chains.

The catalysed reaction is ATP-dependent breakage, passage and rejoining of double-stranded DNA.. With respect to regulation, not inhibited by the DNA gyrase inhibitor novobiocin, instead inhibited by eukaryotic topoisomerase inhibitors such as m- and o-amsacrine, ellipticine, and the quinolone CP-115,953. Radicicol inhibits the ATPase activity. Functionally, relaxes both positive and negative supercoils and exhibits a strong decatenase and unknotting activity; it cannot introduce DNA supercoils. ATP is absolutely required for DNA cleavage; the nonhydrolyzable analog AMP-PNP generates nicked or linear products from a supercoiled dsDNA substrate. Generates staggered two-nucleotide long 5' overhangs. The enzyme is covalently attached transiently to the 5'-ends of the cleaved strands. The sequence is that of Type 2 DNA topoisomerase 6 subunit B from Saccharolobus shibatae (strain ATCC 51178 / DSM 5389 / JCM 8931 / NBRC 15437 / B12) (Sulfolobus shibatae).